The following is a 390-amino-acid chain: Oxygen-dependent coproporphyrinogen-III oxidase (390 aa).

The tract at residues 131–140 (VLQDGDVFEK) is important for dimerization. Ser181 lines the substrate pocket. His195 serves as the catalytic Proton donor. Substrate-binding positions include 197 to 199 (NYR) and 348 to 353 (GARYES). The segment at 329 to 365 (YVEFNLIYDRGTKFGLYTPGARYESILMSLPLHARWE) is important for dimerization.

Belongs to the aerobic coproporphyrinogen-III oxidase family. Homodimer.

The catalysed reaction is coproporphyrinogen III + O2 + 2 H(+) = protoporphyrinogen IX + 2 CO2 + 2 H2O. The protein operates within porphyrin-containing compound metabolism; protoporphyrin-IX biosynthesis; protoporphyrinogen-IX from coproporphyrinogen-III (O2 route): step 1/1. Functionally, involved in the heme biosynthesis. Catalyzes the aerobic oxidative decarboxylation of propionate groups of rings A and B of coproporphyrinogen-III to yield the vinyl groups in protoporphyrinogen-IX. This is Oxygen-dependent coproporphyrinogen-III oxidase (Coprox) from Drosophila melanogaster (Fruit fly).